Here is a 501-residue protein sequence, read N- to C-terminus: Endoglucanase 1 (501 aa).

The signal sequence occupies residues 1–29 (MALYLSSSRLITFLSFILLLSNGFSSSSS). Residue Asp-96 is the Nucleophile of the active site. Catalysis depends on residues His-422, Asp-473, and Glu-482.

The protein belongs to the glycosyl hydrolase 9 (cellulase E) family.

The protein localises to the secreted. The enzyme catalyses Endohydrolysis of (1-&gt;4)-beta-D-glucosidic linkages in cellulose, lichenin and cereal beta-D-glucans.. The protein is Endoglucanase 1 (CEL2) of Arabidopsis thaliana (Mouse-ear cress).